The primary structure comprises 181 residues: Protein Syd (181 aa).

It belongs to the Syd family.

It localises to the cell inner membrane. In terms of biological role, interacts with the SecY protein in vivo. May bind preferentially to an uncomplexed state of SecY, thus functioning either as a chelating agent for excess SecY in the cell or as a regulatory factor that negatively controls the translocase function. The chain is Protein Syd from Salmonella agona (strain SL483).